The sequence spans 781 residues: Protein argonaute (781 aa).

The 85-residue stretch at 110–194 folds into the PAZ domain; the sequence is SMNELLTERR…RHNDYCNSVM (85 aa). In terms of domain architecture, Piwi spans 436–760; it reads LVVIVIPGPK…LSKFCGEVLR (325 aa).

This sequence belongs to the argonaute family. Ago subfamily. As to quaternary structure, interacts with miR2. Highly specific binding to the mRNA m7G-cap. May be a component of the RNA-induced silencing complex (RISC), a sequence-specific, multicomponent nuclease that destroys or silences messenger RNAs homologous to the silencing trigger.

It localises to the cytoplasm. In terms of biological role, plays an essential role in growth and, with Dicer, also involved in microRNA (miRNA)-mediated translational repression. The RNA interference pathway is implicated in antigenic variation having a role in regulation of variant-specific surface protein (VSP)-coding gene expression. Several VSP genes are transcribed but only transcripts encoding the VSP to be expressed accumulate. Antisense RNAs corresponding to the silenced VSP genes are detected. This chain is Protein argonaute, found in Giardia intestinalis (Giardia lamblia).